A 71-amino-acid polypeptide reads, in one-letter code: Conotoxin Bu23 (71 aa).

Residues 1–21 form the signal peptide; sequence MGMRMMVTVFLLGVLATTVVS. Residues 22–37 constitute a propeptide that is removed on maturation; it reads LRSNRASDGRRGIVNK. Asparagine amide is present on Asn70.

Belongs to the conotoxin A superfamily. Contains 3 disulfide bonds. They are not indicated here, since framework IV presents two different connectivities (I-V, II-III, IV-VI and I-III, II-V, IV-VI). As to expression, expressed by the venom duct.

Its subcellular location is the secreted. This chain is Conotoxin Bu23, found in Conus bullatus (Bubble cone).